The primary structure comprises 539 residues: MHGFRALKSEVIMSNMTNAAPHTPIQEADYSAIHPPSLLKRLELTNPVFWLSGSFLSLFVLLALTNTESLTAMVNAGFGFATKYFGAYWQVLLLLNFLIGLALAFGRTGYVRLGGLAKPDIDTFKWLSIVLCTLLAGGGVFWAAAEPIAHFVTAPPLYGEASPKTSAINALSQSFMHWGFLAWAILGCLSSIVLMHLHYDKGLPLKPRTLLYPIFGDKAIHGWIGNLADACSIIAVAAGTIGPIGFLGLQISYALNSLFGFPDNFITQSMVIVAAIVMYTLSALSGVSKGIQLVSRYNIILSVLLIGYILFFGPTSFIIDGYVQGVGRMVDNFFPMALYRDDTGWLSWWTVFFWGWFIGYGPMMAIFIARISRGRTIRQLILSISIAAPLITCFWFSIVGGSGLAFELANPGLISSAFEGFNLPAVLLAITGELPFPMIISVLFLILTTTFIVTTGDSMTYTISVVMTGSAEPNAVIRSFWGLMMGVVAIALISMGSGGITALQSFIVITAVPVSFILLPSILKAPGIANQMAKDQGLV.

12 helical membrane passes run 44 to 64 (LTNP…LLAL), 85 to 105 (FGAY…ALAF), 129 to 149 (IVLC…EPIA), 175 to 195 (FMHW…IVLM), 231 to 251 (CSII…GLQI), 265 to 285 (FITQ…SALS), 299 to 319 (IILS…SFII), 348 to 368 (WWTV…AIFI), 380 to 400 (LILS…SIVG), 426 to 446 (VLLA…LFLI), 480 to 500 (FWGL…SGGI), and 503 to 523 (LQSF…PSIL).

This sequence belongs to the BCCT transporter (TC 2.A.15) family.

The protein resides in the cell inner membrane. Functionally, involved in the uptake of the osmoprotectant glycine betaine. The sequence is that of Glycine betaine transporter 2 from Vibrio parahaemolyticus serotype O3:K6 (strain RIMD 2210633).